A 560-amino-acid chain; its full sequence is Putative transport protein VP1232 (560 aa).

Transmembrane regions (helical) follow at residues 8–28 (LLDQ…LAIG), 37–57 (LGNS…GFSF), 66–86 (FMLF…GIFF), 91–111 (HYFI…YGLS), and 164–184 (VGYA…AKLL). RCK C-terminal domains are found at residues 205–292 (LGNS…FRNG) and 293–376 (KEVF…KIGF). 6 helical membrane passes run 386-406 (LLAF…TMTF), 409-429 (VSFS…LGFL), 443-463 (ALNM…GLSA), 478-498 (VIGL…LVGA), 506-526 (ALLF…DVVN), and 539-559 (AGTY…LIIL).

Belongs to the AAE transporter (TC 2.A.81) family. YbjL subfamily.

The protein resides in the cell membrane. This Vibrio parahaemolyticus serotype O3:K6 (strain RIMD 2210633) protein is Putative transport protein VP1232.